The chain runs to 141 residues: MATLHVDVVSAEEAIFSGEAKFVVLPGESGELGILPGHTPLISRIRPGTVKIVRADEGEENIFVAGGILEVQPGSVTVLSDTAIRAADLDEARALAAREKAEEALRNAKDREDIAAVEAELAMLAAQALAARRLRPGRGSH.

This sequence belongs to the ATPase epsilon chain family. F-type ATPases have 2 components, CF(1) - the catalytic core - and CF(0) - the membrane proton channel. CF(1) has five subunits: alpha(3), beta(3), gamma(1), delta(1), epsilon(1). CF(0) has three main subunits: a, b and c.

It localises to the cell inner membrane. In terms of biological role, produces ATP from ADP in the presence of a proton gradient across the membrane. In Bordetella avium (strain 197N), this protein is ATP synthase epsilon chain.